A 184-amino-acid chain; its full sequence is Ribosome-recycling factor (184 aa).

Belongs to the RRF family.

It localises to the cytoplasm. In terms of biological role, responsible for the release of ribosomes from messenger RNA at the termination of protein biosynthesis. May increase the efficiency of translation by recycling ribosomes from one round of translation to another. The chain is Ribosome-recycling factor from Borrelia recurrentis (strain A1).